The chain runs to 438 residues: Cyanidin-3-O-glucoside 2-O-glucuronosyltransferase (438 aa).

UDP-alpha-D-glucuronate contacts are provided by residues serine 264, 315-316 (WV), 333-341 (HCGWSSTME), and 355-358 (QFDQ).

The protein belongs to the UDP-glycosyltransferase family. Monomer. As to expression, expressed in petals. Not detected in sepals, stems, leaves, tubular corollas and white petals.

It is found in the cytoplasm. The catalysed reaction is cyanidin 3-O-beta-D-glucoside + UDP-alpha-D-glucuronate = cyanidin 3-O-(2-O-beta-D-glucuronosyl)-beta-D-glucoside + UDP + H(+). Inhibited by copper, mercury, UDP, UTP and partially by calcium, cadmium, iron and UMP. Not affected by cobalt, magnesium, manganese, zinc, nickel, tin, uridine, sadium malonate and glucose. Functionally, involved in the production of glucuronosylated anthocyanins that are the origin of the red coloration of flowers. Can use cyanidin 3-O-6''-O-malonylglucoside, cyanidin 3-O-glucoside and delphinidin 3-O-glucosideas substrates, but not pelargonidin 3-O-glucoside, cyanidin 3-O-3'',6''-O-dimalonylglucoside, pelargonidin 3,5-O-diglucoside, pelargonidin 3-O-6''-O-malonylglucoside-5-O-glucoside, quercetin 3-O-glucoside, quercetin 3-O-6''-O-malonylglucoside, daidzin, genistin,7-O-6''-O-malonylglucosides of daidzein and genistein, cyanidin, quercetin, daidzein, genistein p-Nitrophenyl beta-D-glucopyranoside, beta-estradiol, 17alpha-estradiol, 1-naphthol, 2-naphthol, 4-methylumbelliferone, and p-nitrophenol. Highly specific for UDP-glucuronate (UDP-GlcUA). Arg-25 is decisive with respect to UDP-sugar specificity. In Bellis perennis (English daisy), this protein is Cyanidin-3-O-glucoside 2-O-glucuronosyltransferase (UGAT).